A 24-amino-acid polypeptide reads, in one-letter code: Brevinin-1SPa (24 aa).

Cysteines 18 and 24 form a disulfide.

As to expression, expressed by the skin glands.

It localises to the secreted. Its function is as follows. Antimicrobial peptide with activity against Gram-negative and Gram-positive bacteria (MIC=13 uM against E.coli, MIC=3 uM against S.aureus) and fungi (MIC=6 uM against C.albicans). Shows hemolytic activity on human erythrocytes (HC(50)=7 uM). In Lithobates septentrionalis (Mink frog), this protein is Brevinin-1SPa.